Reading from the N-terminus, the 937-residue chain is Molybdenum cofactor sulfurase (937 aa).

Lysine 237 is subject to N6-(pyridoxal phosphate)lysine. Cysteine 397 is a catalytic residue. Disordered stretches follow at residues 633–710 (GQGK…RRIL), 756–795 (PSPS…KLNP), and 897–921 (KEGT…GGNG). Residues 638–652 (MTRHAKAHLQRHQHQ) show a composition bias toward basic residues. Positions 682–935 (TPPSPPDSDT…VRVGDVVRPS (254 aa)) constitute an MOSC domain. A compositionally biased stretch (low complexity) spans 756–767 (PSPSTPSASPSN). Residues 900–921 (TGMGMGTGTGTGTGTRSMGGNG) show a composition bias toward gly residues.

Belongs to the class-V pyridoxal-phosphate-dependent aminotransferase family. MOCOS subfamily. Pyridoxal 5'-phosphate serves as cofactor.

It carries out the reaction Mo-molybdopterin + L-cysteine + AH2 = thio-Mo-molybdopterin + L-alanine + A + H2O. It participates in cofactor biosynthesis; molybdopterin biosynthesis. Its function is as follows. Sulfurates the molybdenum cofactor. Sulfation of molybdenum is essential for xanthine dehydrogenase (XDH) and aldehyde oxidase (ADO) enzymes in which molybdenum cofactor is liganded by 1 oxygen and 1 sulfur atom in active form. The protein is Molybdenum cofactor sulfurase (nit-13) of Neurospora crassa (strain ATCC 24698 / 74-OR23-1A / CBS 708.71 / DSM 1257 / FGSC 987).